A 218-amino-acid polypeptide reads, in one-letter code: Thiopurine S-methyltransferase (218 aa).

S-adenosyl-L-methionine is bound by residues Trp10, Leu45, Glu66, and Arg123.

It belongs to the class I-like SAM-binding methyltransferase superfamily. TPMT family.

It localises to the cytoplasm. It carries out the reaction S-adenosyl-L-methionine + a thiopurine = S-adenosyl-L-homocysteine + a thiopurine S-methylether.. This chain is Thiopurine S-methyltransferase, found in Shewanella sp. (strain W3-18-1).